The sequence spans 205 residues: Proteasome subunit beta type-3 (205 aa).

At Ser2 the chain carries N-acetylserine. The residue at position 77 (Lys77) is an N6-acetyllysine.

It belongs to the peptidase T1B family. As to quaternary structure, the 26S proteasome consists of a 20S proteasome core and two 19S regulatory subunits. The 20S proteasome core is a barrel-shaped complex made of 28 subunits that are arranged in four stacked rings. The two outer rings are each formed by seven alpha subunits, and the two inner rings are formed by seven beta subunits. The proteolytic activity is exerted by three beta-subunits PSMB5, PSMB6 and PSMB7. (Microbial infection) Interacts with HIV-1 TAT protein.

The protein resides in the cytoplasm. It is found in the nucleus. Functionally, non-catalytic component of the 20S core proteasome complex involved in the proteolytic degradation of most intracellular proteins. This complex plays numerous essential roles within the cell by associating with different regulatory particles. Associated with two 19S regulatory particles, forms the 26S proteasome and thus participates in the ATP-dependent degradation of ubiquitinated proteins. The 26S proteasome plays a key role in the maintenance of protein homeostasis by removing misfolded or damaged proteins that could impair cellular functions, and by removing proteins whose functions are no longer required. Associated with the PA200 or PA28, the 20S proteasome mediates ubiquitin-independent protein degradation. This type of proteolysis is required in several pathways including spermatogenesis (20S-PA200 complex) or generation of a subset of MHC class I-presented antigenic peptides (20S-PA28 complex). In Homo sapiens (Human), this protein is Proteasome subunit beta type-3.